We begin with the raw amino-acid sequence, 366 residues long: Putative RING-H2 finger protein ATL21C (366 aa).

An N-terminal signal peptide occupies residues Met-1–Ala-23. Residues Leu-243–Ile-263 form a helical membrane-spanning segment. The segment at Cys-320–Arg-362 adopts an RING-type; atypical zinc-finger fold.

Belongs to the RING-type zinc finger family. ATL subfamily.

The protein localises to the membrane. The catalysed reaction is S-ubiquitinyl-[E2 ubiquitin-conjugating enzyme]-L-cysteine + [acceptor protein]-L-lysine = [E2 ubiquitin-conjugating enzyme]-L-cysteine + N(6)-ubiquitinyl-[acceptor protein]-L-lysine.. The protein operates within protein modification; protein ubiquitination. The polypeptide is Putative RING-H2 finger protein ATL21C (ATL21C) (Arabidopsis thaliana (Mouse-ear cress)).